Reading from the N-terminus, the 649-residue chain is tRNA-guanine(15) transglycosylase (649 aa).

D88 functions as the Nucleophile in the catalytic mechanism. Substrate is bound by residues D123 and A194. The Zn(2+) site is built by C280, C282, and C285. Positions 572-647 (KYRVIVDKSV…VAVNIRGGLK (76 aa)) constitute a PUA domain.

The protein belongs to the archaeosine tRNA-ribosyltransferase family. It depends on Zn(2+) as a cofactor.

It carries out the reaction guanosine(15) in tRNA + 7-cyano-7-deazaguanine = 7-cyano-7-carbaguanosine(15) in tRNA + guanine. It participates in tRNA modification; archaeosine-tRNA biosynthesis. Exchanges the guanine residue with 7-cyano-7-deazaguanine (preQ0) at position 15 in the dihydrouridine loop (D-loop) of archaeal tRNAs. The sequence is that of tRNA-guanine(15) transglycosylase from Methanococcus vannielii (strain ATCC 35089 / DSM 1224 / JCM 13029 / OCM 148 / SB).